Here is a 39-residue protein sequence, read N- to C-terminus: Photosystem II reaction center protein L (39 aa).

Residues 18-38 (SLYLGLLLVFVMGILFSSYFF) form a helical membrane-spanning segment.

It belongs to the PsbL family. PSII is composed of 1 copy each of membrane proteins PsbA, PsbB, PsbC, PsbD, PsbE, PsbF, PsbH, PsbI, PsbJ, PsbK, PsbL, PsbM, PsbT, PsbX, PsbY, Psb30/Ycf12, peripheral proteins PsbO, CyanoQ (PsbQ), PsbU, PsbV and a large number of cofactors. It forms dimeric complexes.

Its subcellular location is the cellular thylakoid membrane. One of the components of the core complex of photosystem II (PSII). PSII is a light-driven water:plastoquinone oxidoreductase that uses light energy to abstract electrons from H(2)O, generating O(2) and a proton gradient subsequently used for ATP formation. It consists of a core antenna complex that captures photons, and an electron transfer chain that converts photonic excitation into a charge separation. This subunit is found at the monomer-monomer interface and is required for correct PSII assembly and/or dimerization. This is Photosystem II reaction center protein L from Prochlorococcus marinus (strain NATL2A).